Here is a 480-residue protein sequence, read N- to C-terminus: Uridine 5'-monophosphate synthase (480 aa).

Position 2 is an N-acetylalanine (Ala-2). The interval Ala-2–Ser-214 is OPRTase. Residue Tyr-37 is modified to Phosphotyrosine. Ser-214 carries the phosphoserine modification. A domain linker region spans residues Pro-215 to Glu-220. The tract at residues Ala-221–Val-480 is OMPdecase. Ser-257 contacts orotidine 5'-phosphate. UMP contacts are provided by residues Ser-257, Asp-259, and Lys-281 to His-283. An orotidine 5'-phosphate-binding site is contributed by Lys-281. Active-site for OMPdecase activity residues include Asp-312, Lys-314, and Asp-317. Residues Lys-314, Asp-317, Thr-321, Ser-372, Gln-430–Tyr-432, and Gly-450–Arg-451 each bind orotidine 5'-phosphate. Residues Asp-317, Thr-321, Ser-372, Gln-430 to Tyr-432, and Gly-450 to Arg-451 each bind UMP.

In the N-terminal section; belongs to the purine/pyrimidine phosphoribosyltransferase family. This sequence in the C-terminal section; belongs to the OMP decarboxylase family. In terms of assembly, homodimer; dimerization is required for enzymatic activity.

The catalysed reaction is orotidine 5'-phosphate + diphosphate = orotate + 5-phospho-alpha-D-ribose 1-diphosphate. It catalyses the reaction orotidine 5'-phosphate + H(+) = UMP + CO2. Its pathway is pyrimidine metabolism; UMP biosynthesis via de novo pathway; UMP from orotate: step 1/2. The protein operates within pyrimidine metabolism; UMP biosynthesis via de novo pathway; UMP from orotate: step 2/2. In terms of biological role, bifunctional enzyme catalyzing the last two steps of de novo pyrimidine biosynthesis, orotate phosphoribosyltransferase (OPRT), which converts orotate to orotidine-5'-monophosphate (OMP), and orotidine-5'-monophosphate decarboxylase (ODC), the terminal enzymatic reaction that decarboxylates OMP to uridine monophosphate (UMP). This chain is Uridine 5'-monophosphate synthase, found in Homo sapiens (Human).